A 97-amino-acid polypeptide reads, in one-letter code: Exodeoxyribonuclease 7 small subunit (97 aa).

Residues 64–97 (NGQLHPAEEKGDDVSNNGVQNQGYKSQFLDGDVF) form a disordered region. Polar residues predominate over residues 77-88 (VSNNGVQNQGYK).

Belongs to the XseB family. In terms of assembly, heterooligomer composed of large and small subunits.

The protein resides in the cytoplasm. The enzyme catalyses Exonucleolytic cleavage in either 5'- to 3'- or 3'- to 5'-direction to yield nucleoside 5'-phosphates.. Bidirectionally degrades single-stranded DNA into large acid-insoluble oligonucleotides, which are then degraded further into small acid-soluble oligonucleotides. This Limosilactobacillus fermentum (strain NBRC 3956 / LMG 18251) (Lactobacillus fermentum) protein is Exodeoxyribonuclease 7 small subunit.